The primary structure comprises 334 residues: Beta-hexosaminidase (334 aa).

Substrate contacts are provided by residues aspartate 62, arginine 70, arginine 130, and 160–161 (KH). The Proton donor/acceptor role is filled by histidine 173. The Nucleophile role is filled by aspartate 243.

Belongs to the glycosyl hydrolase 3 family. NagZ subfamily.

Its subcellular location is the cytoplasm. It carries out the reaction Hydrolysis of terminal non-reducing N-acetyl-D-hexosamine residues in N-acetyl-beta-D-hexosaminides.. Its pathway is cell wall biogenesis; peptidoglycan recycling. In terms of biological role, plays a role in peptidoglycan recycling by cleaving the terminal beta-1,4-linked N-acetylglucosamine (GlcNAc) from peptide-linked peptidoglycan fragments, giving rise to free GlcNAc, anhydro-N-acetylmuramic acid and anhydro-N-acetylmuramic acid-linked peptides. This chain is Beta-hexosaminidase, found in Photobacterium profundum (strain SS9).